The primary structure comprises 896 residues: Protein translocase subunit SecA (896 aa).

Residues Q87, 105–109 (GEGKT), and D507 contribute to the ATP site. The interval 853–879 (ESLSENDEASETQTFRRQEKKIGRNDP) is disordered. Residues 866-876 (TFRRQEKKIGR) are compositionally biased toward basic and acidic residues. Positions 880, 882, 891, and 892 each coordinate Zn(2+).

It belongs to the SecA family. Monomer and homodimer. Part of the essential Sec protein translocation apparatus which comprises SecA, SecYEG and auxiliary proteins SecDF-YajC and YidC. Zn(2+) serves as cofactor.

Its subcellular location is the cell inner membrane. It is found in the cytoplasm. The catalysed reaction is ATP + H2O + cellular proteinSide 1 = ADP + phosphate + cellular proteinSide 2.. Part of the Sec protein translocase complex. Interacts with the SecYEG preprotein conducting channel. Has a central role in coupling the hydrolysis of ATP to the transfer of proteins into and across the cell membrane, serving both as a receptor for the preprotein-SecB complex and as an ATP-driven molecular motor driving the stepwise translocation of polypeptide chains across the membrane. The chain is Protein translocase subunit SecA from Legionella pneumophila (strain Corby).